The sequence spans 420 residues: Carbohydrate sulfotransferase 1 (420 aa).

Met1 is a topological domain (cytoplasmic). The chain crosses the membrane as a helical; Signal-anchor for type II membrane protein span at residues Gln2–Ile23. Residues Arg24–Leu420 lie on the Lumenal side of the membrane. Asn64 carries an N-linked (GlcNAc...) asparagine glycan. Thr77–Phe83 is a binding site for 3'-phosphoadenylyl sulfate. Residues Asn153 and Asn197 are each glycosylated (N-linked (GlcNAc...) asparagine). Arg242–Ser250 contributes to the 3'-phosphoadenylyl sulfate binding site. Residues Asn342 and Asn405 are each glycosylated (N-linked (GlcNAc...) asparagine).

Belongs to the sulfotransferase 1 family. Gal/GlcNAc/GalNAc subfamily.

It localises to the golgi apparatus membrane. The catalysed reaction is 3'-phosphoadenylyl sulfate + keratan = adenosine 3',5'-bisphosphate + keratan 6'-sulfate.. Functionally, sulfotransferase that utilizes 3'-phospho-5'-adenylyl sulfate (PAPS) as sulfonate donor to catalyze the transfer of sulfate to position 6 of galactose (Gal) residues of keratan. The sequence is that of Carbohydrate sulfotransferase 1 (chst1) from Danio rerio (Zebrafish).